The sequence spans 510 residues: Histone deacetylase 3 (510 aa).

The segment at 24-338 (RRVCYFYDPE…WCYETGVALG (315 aa)) is histone deacetylase. The active-site Proton donor/acceptor is the His158. Zn(2+)-binding residues include Asp193, His195, and Asp281. Residues 394–510 (PSVQFQERIP…ARNEPGSSPK (117 aa)) form a disordered region. Composition is skewed to basic and acidic residues over residues 418 to 434 (DERH…DHKP) and 448 to 472 (VKRE…HKGP). The span at 485–503 (APTADANAVAVNAPGNARN) shows a compositional bias: low complexity.

It belongs to the histone deacetylase family. HD Type 1 subfamily. The cofactor is Zn(2+). Expressed in roots.

It localises to the nucleus. It carries out the reaction N(6)-acetyl-L-lysyl-[histone] + H2O = L-lysyl-[histone] + acetate. Functionally, responsible for the deacetylation of lysine residues on the N-terminal part of the core histones (H2A, H2B, H3 and H4). Histone deacetylation gives a tag for epigenetic repression and plays an important role in transcriptional regulation, cell cycle progression and developmental events. Histone deacetylases act via the formation of large multiprotein complexes. The polypeptide is Histone deacetylase 3 (Oryza sativa subsp. japonica (Rice)).